A 246-amino-acid polypeptide reads, in one-letter code: MQALLFLMALLLPSGAGAEEIIGGVESEPHSRPYMAYVNTFRRKGYVAICGGFLITPQFVMTAAHCRGRRMTVTLGAHNVRKRECTQQKIKVEKYILPPNYNVSSKFNDIVLLKLKKQANLTSAVDVVPLPGPSDFAKPGTMCWAAGWGRTGVKKIISHTLREVELKIVGEKACKIFRHYKDSLQICVGSSTKVASVYMGDSGGPLLCAGVAHGIVSSGRGNAKPPAIFTRISPHVPWINRVIKGK.

The signal sequence occupies residues 1 to 18 (MQALLFLMALLLPSGAGA). Positions 19–20 (EE) are cleaved as a propeptide — activation peptide. Residues 21-244 (IIGGVESEPH…HVPWINRVIK (224 aa)) enclose the Peptidase S1 domain. Cys50 and Cys66 form a disulfide bridge. Active-site charge relay system residues include His65 and Asp109. 2 disulfides stabilise this stretch: Cys143–Cys208 and Cys174–Cys187. Ser202 serves as the catalytic Charge relay system.

The protein belongs to the peptidase S1 family. Granzyme subfamily.

The protein is Mast cell protease-like protein (Mcptl) of Mus musculus (Mouse).